A 510-amino-acid chain; its full sequence is tRNA(Ile)-lysidine synthase (510 aa).

32 to 37 (SGGLDS) contacts ATP.

Belongs to the tRNA(Ile)-lysidine synthase family.

It is found in the cytoplasm. It catalyses the reaction cytidine(34) in tRNA(Ile2) + L-lysine + ATP = lysidine(34) in tRNA(Ile2) + AMP + diphosphate + H(+). Ligates lysine onto the cytidine present at position 34 of the AUA codon-specific tRNA(Ile) that contains the anticodon CAU, in an ATP-dependent manner. Cytidine is converted to lysidine, thus changing the amino acid specificity of the tRNA from methionine to isoleucine. In Blochmanniella pennsylvanica (strain BPEN), this protein is tRNA(Ile)-lysidine synthase.